The sequence spans 215 residues: Small ribosomal subunit protein uS3 (215 aa).

The KH type-2 domain maps to 39–107 (VRQYLQKKLA…PVHINIEEIR (69 aa)).

This sequence belongs to the universal ribosomal protein uS3 family. In terms of assembly, part of the 30S ribosomal subunit. Forms a tight complex with proteins S10 and S14.

Binds the lower part of the 30S subunit head. Binds mRNA in the 70S ribosome, positioning it for translation. The polypeptide is Small ribosomal subunit protein uS3 (Nitrosomonas europaea (strain ATCC 19718 / CIP 103999 / KCTC 2705 / NBRC 14298)).